Here is a 346-residue protein sequence, read N- to C-terminus: UDP-N-acetylenolpyruvoylglucosamine reductase (346 aa).

The region spanning 18-189 (LRAQARAFIA…VSVVFALKTH (172 aa)) is the FAD-binding PCMH-type domain. Arg-165 is a catalytic residue. Catalysis depends on Ser-240, which acts as the Proton donor. The active site involves Glu-336.

This sequence belongs to the MurB family. FAD is required as a cofactor.

Its subcellular location is the cytoplasm. It carries out the reaction UDP-N-acetyl-alpha-D-muramate + NADP(+) = UDP-N-acetyl-3-O-(1-carboxyvinyl)-alpha-D-glucosamine + NADPH + H(+). Its pathway is cell wall biogenesis; peptidoglycan biosynthesis. Cell wall formation. In Neisseria meningitidis serogroup A / serotype 4A (strain DSM 15465 / Z2491), this protein is UDP-N-acetylenolpyruvoylglucosamine reductase.